We begin with the raw amino-acid sequence, 471 residues long: Methionine aminopeptidase 2 (471 aa).

2 disordered regions span residues 16-80 and 92-139; these read VVDD…IDRF and CEHP…DFNR. Positions 32-47 are enriched in acidic residues; the sequence is EDGDDNDDAVNEGEAV. The segment covering 52–65 has biased composition (basic residues); the sequence is KKKKKKNKKKKKKG. Over residues 119–139 the composition is skewed to basic and acidic residues; the sequence is AEERAKDDAKHGSDDPLDFNR. Residue histidine 224 coordinates substrate. The a divalent metal cation site is built by aspartate 244, aspartate 255, and histidine 324. Histidine 332 contacts substrate. A divalent metal cation is bound by residues glutamate 357 and glutamate 452.

Belongs to the peptidase M24A family. Methionine aminopeptidase eukaryotic type 2 subfamily. The cofactor is Co(2+). Requires Zn(2+) as cofactor. Mn(2+) serves as cofactor. Fe(2+) is required as a cofactor.

It localises to the cytoplasm. The enzyme catalyses Release of N-terminal amino acids, preferentially methionine, from peptides and arylamides.. Functionally, cotranslationally removes the N-terminal methionine from nascent proteins. The N-terminal methionine is often cleaved when the second residue in the primary sequence is small and uncharged (Met-Ala-, Cys, Gly, Pro, Ser, Thr, or Val). The protein is Methionine aminopeptidase 2 of Yarrowia lipolytica (strain CLIB 122 / E 150) (Yeast).